A 271-amino-acid chain; its full sequence is DNA-directed RNA polymerase subunit Rpo3 (271 aa).

Belongs to the archaeal Rpo3/eukaryotic RPB3 RNA polymerase subunit family. In terms of assembly, part of the RNA polymerase complex.

The protein localises to the cytoplasm. It catalyses the reaction RNA(n) + a ribonucleoside 5'-triphosphate = RNA(n+1) + diphosphate. Functionally, DNA-dependent RNA polymerase (RNAP) catalyzes the transcription of DNA into RNA using the four ribonucleoside triphosphates as substrates. The polypeptide is DNA-directed RNA polymerase subunit Rpo3 (Picrophilus torridus (strain ATCC 700027 / DSM 9790 / JCM 10055 / NBRC 100828 / KAW 2/3)).